Consider the following 99-residue polypeptide: DNA-directed RNA polymerase subunit omega (99 aa).

This sequence belongs to the RNA polymerase subunit omega family. In terms of assembly, the RNAP catalytic core consists of 2 alpha, 1 beta, 1 beta' and 1 omega subunit. When a sigma factor is associated with the core the holoenzyme is formed, which can initiate transcription.

The catalysed reaction is RNA(n) + a ribonucleoside 5'-triphosphate = RNA(n+1) + diphosphate. Promotes RNA polymerase assembly. Latches the N- and C-terminal regions of the beta' subunit thereby facilitating its interaction with the beta and alpha subunits. In Xanthomonas axonopodis pv. citri (strain 306), this protein is DNA-directed RNA polymerase subunit omega.